The sequence spans 691 residues: MIAGQVSKPLLSVRSEMNAELRGEDKAATSDSELNEPLLAPAESNDSEDTPSKLFGARGNTVLPDPGTPDQHQACQTHPTFPVGPQPLLTAQQLASAVAGVMPGGPPALNQPILIPFNMAGQLGGQQGLVLTLPTANLTNIQGLVAAAAAGGIMTLPLQNLQATSSLNSQLQQLQQLQLQQQQQQQQQQQQQQQQQQQPPPPPTSQHPQPASQAPPQSQPTPPHQPPPASQQLPAPPAQLEQATQPQQHQPHSHPQNQTQNQPSPTQQSSSPPQKPSPSPGHSLPSPLTPPNPLQLVNNPLASQAAAAAAAMGSIASSQAFGNALSSLQGVTGQLVTNAQGQIIGTIPLMPNPGPSSQAASGTQGLQVQPITPQLLTNAQGQIIATVIGNQILPVINTQGITLSPIKPGQQLHQSSQTSVGQAGTQGNLLHLAHGQAATSHSPVRQASSSSSSSSSSSALSVGQLVSNPQTAAGEVDGVNLEEIREFAKAFKIRRLSLGLTQTQVGQALSATEGPAYSQSAICRHTILRSHFFLPQEAQENTIASSLTAKLNPGLLYPARFEKLDITPKSAQKIKPVLERWMAEAEARHRAGMQNLTEFIGSEPSKKRKRRTSFTPQALEILNAHFEKNTHPSGQEMTEIAEKLNYDREVVRVWFCNKRQALKNTIKRLKQHEPTSAAPLEPLADSPEENC.

3 disordered regions span residues methionine 1–threonine 61, glutamine 188–valine 297, and glycine 435–serine 461. The span at methionine 17 to alanine 28 shows a compositional bias: basic and acidic residues. Low complexity-rich tracts occupy residues glutamine 188–glutamine 197 and glutamine 206–proline 216. The span at glutamine 217–proline 237 shows a compositional bias: pro residues. A compositionally biased stretch (low complexity) spans alanine 238–proline 272. Over residues alanine 437 to alanine 447 the composition is skewed to polar residues. Residues serine 448–serine 458 show a composition bias toward low complexity. A POU-specific domain is found at valine 476–glutamate 586. The homeobox DNA-binding region spans lysine 607–isoleucine 666. Residues lysine 670–cysteine 691 are disordered.

This sequence belongs to the POU transcription factor family. Class-6 subfamily. In terms of tissue distribution, expressed in kidney, heart, muscle, spleen and ovary, but not in lung.

It is found in the nucleus. In terms of biological role, probable transcription factor likely to be involved in early steps in the differentiation of amacrine and ganglion cells. Recognizes and binds to the DNA sequence 5'-ATGCAAAT-3'. The sequence is that of POU domain, class 6, transcription factor 2 (Pou6f2) from Mus musculus (Mouse).